A 193-amino-acid chain; its full sequence is Secreted RxLR effector protein 126 (193 aa).

The N-terminal stretch at 1–20 is a signal peptide; it reads MRYLLAVLIAAAFVISSGTS. The short motif at 50-64 is the RxLR-dEER element; it reads RMLQTKAVNGLEEER.

This sequence belongs to the RxLR effector family.

The protein localises to the secreted. It localises to the host membrane. Its function is as follows. Secreted effector that completely suppresses the host cell death induced by cell death-inducing proteins. The polypeptide is Secreted RxLR effector protein 126 (Plasmopara viticola (Downy mildew of grapevine)).